Reading from the N-terminus, the 291-residue chain is Tryptophan synthase alpha chain (291 aa).

Active-site proton acceptor residues include Glu69 and Asp80.

Belongs to the TrpA family. As to quaternary structure, tetramer of two alpha and two beta chains.

It carries out the reaction (1S,2R)-1-C-(indol-3-yl)glycerol 3-phosphate + L-serine = D-glyceraldehyde 3-phosphate + L-tryptophan + H2O. It participates in amino-acid biosynthesis; L-tryptophan biosynthesis; L-tryptophan from chorismate: step 5/5. In terms of biological role, the alpha subunit is responsible for the aldol cleavage of indoleglycerol phosphate to indole and glyceraldehyde 3-phosphate. The polypeptide is Tryptophan synthase alpha chain (Bifidobacterium longum (strain NCC 2705)).